The following is a 348-amino-acid chain: Abnormal cell lineage protein 44 (348 aa).

A signal peptide spans 1-25; it reads MRAAPFDFFFQSTALSTFFILCSLA. 11 cysteine pairs are disulfide-bonded: C91/C102, C141/C149, C151/C165, C213/C227, C215/C222, C272/C299, C282/C294, C298/C338, C314/C329, C316/C326, and C321/C322. A lipid anchor (O-palmitoleoyl serine; by mom-1) is attached at S219. N286 carries an N-linked (GlcNAc...) asparagine glycan.

It belongs to the Wnt family. Palmitoleoylation is required for efficient binding to frizzled receptors. Depalmitoleoylation leads to Wnt signaling pathway inhibition. Expressed in the tail hypodermis.

Its subcellular location is the secreted. It localises to the extracellular space. The protein resides in the extracellular matrix. Ligand for members of the frizzled family of seven transmembrane receptors. Affects male tail development, vulval precursor cell specification and egg laying. Involved in morphogenesis by influencing polarity of asymmetric cell divisions of the B, U, and F cells in the male, and the T cell in males and hermaphrodites. Controls spindle orientation in B-gamma cell division during male copulatory spicule development. Involved in specification of the P7.p lineage during vulval development. Has a role in providing polarity and default lin-17 localization in axon development and positioning of neuromuscular synapses in DA9 regions by negatively regulating synaptogenesis. Plays a role in motorneuron development by promoting the extension of the anterior neurite of ventral D-type GABAergic motorneurons along the anterior-posterior axis of the ventral nerve cord. Positively regulates cilium position and dendrite morphogenesis in postembryonic PQR gas-sensing neurons. This is likely through regulating the localization of grdn-1 to the distal dendrites of PQR sensory neurons. This Caenorhabditis elegans protein is Abnormal cell lineage protein 44.